Reading from the N-terminus, the 260-residue chain is Tropinone reductase homolog At2g29330 (260 aa).

13–37 (LVTGGASGIGHAIVEELAGFGAKIH) provides a ligand contact to NADP(+). S146 is a binding site for substrate. Y159 functions as the Proton acceptor in the catalytic mechanism.

It belongs to the short-chain dehydrogenases/reductases (SDR) family. SDR65C subfamily.

Its function is as follows. Reductase active only on small flexible lipophilic carbonyls. No activity with cyclic monoterpenes, tropinone, nitrogen-containing tropinone analogs, tropine or pseudotropine as substrate. The sequence is that of Tropinone reductase homolog At2g29330 from Arabidopsis thaliana (Mouse-ear cress).